A 348-amino-acid chain; its full sequence is MTVRIAINGFGRIGRNVVRALYESGRRAEITVVAINELADAAGMAHLLKYDTSHGRFAWEVRHEREQLFVGDDVIRILHERTLADLPWRELGVDVVLDCTGVYGNREHGEAHIAAGAKKVLFSHPGSNDLDATVVFGVNQNQLRAEHRIVSNASCTTNCIIPVIKLLDDAYGIESGTVTTIHSAMNDQQVIDAYHSDLRRTRAASQSIIPVDTKLAAGITRIFPQFNDRFEAIAVRVPTINVTAIDLSVTVKKTVKASEVNQLLQKAAQGAFHGIVDYTESPLVSIDFNHDPHSAIVDGTQTRVSGAHLIKTLVWCDNEWGFANRMLDTTLAMAAVGFRLDASASTKL.

Residues 12–13 and R81 contribute to the NAD(+) site; that span reads RI. Substrate contacts are provided by residues 154–156, R200, 213–214, and R236; these read SCT and TK. C155 serves as the catalytic Nucleophile. N318 contacts NAD(+).

It belongs to the glyceraldehyde-3-phosphate dehydrogenase family. Epd subfamily. Homotetramer.

It is found in the cytoplasm. It carries out the reaction D-erythrose 4-phosphate + NAD(+) + H2O = 4-phospho-D-erythronate + NADH + 2 H(+). It functions in the pathway cofactor biosynthesis; pyridoxine 5'-phosphate biosynthesis; pyridoxine 5'-phosphate from D-erythrose 4-phosphate: step 1/5. In terms of biological role, catalyzes the NAD-dependent conversion of D-erythrose 4-phosphate to 4-phosphoerythronate. In Salmonella paratyphi B (strain ATCC BAA-1250 / SPB7), this protein is D-erythrose-4-phosphate dehydrogenase.